Reading from the N-terminus, the 611-residue chain is Threonine--tRNA ligase (611 aa).

Positions 1–145 are editing domain; it reads MRLLLIHSDH…TILPGEGAAA (145 aa). The interval 195 to 487 is catalytic; it reads VHVDLMRAKE…TAAQEVPSFP (293 aa). Zn(2+) is bound by residues C287, H339, and H460.

The protein belongs to the class-II aminoacyl-tRNA synthetase family. In terms of assembly, homodimer. Zn(2+) serves as cofactor.

It is found in the cytoplasm. It carries out the reaction tRNA(Thr) + L-threonine + ATP = L-threonyl-tRNA(Thr) + AMP + diphosphate + H(+). Its function is as follows. Catalyzes the attachment of threonine to tRNA(Thr) in a two-step reaction: L-threonine is first activated by ATP to form Thr-AMP and then transferred to the acceptor end of tRNA(Thr). Also edits incorrectly charged L-seryl-tRNA(Thr). The chain is Threonine--tRNA ligase from Methanoculleus marisnigri (strain ATCC 35101 / DSM 1498 / JR1).